A 130-amino-acid chain; its full sequence is Small ribosomal subunit protein uS11 (130 aa).

Belongs to the universal ribosomal protein uS11 family. In terms of assembly, part of the 30S ribosomal subunit. Interacts with proteins S7 and S18. Binds to IF-3.

Its function is as follows. Located on the platform of the 30S subunit, it bridges several disparate RNA helices of the 16S rRNA. Forms part of the Shine-Dalgarno cleft in the 70S ribosome. This is Small ribosomal subunit protein uS11 from Gluconacetobacter diazotrophicus (strain ATCC 49037 / DSM 5601 / CCUG 37298 / CIP 103539 / LMG 7603 / PAl5).